Here is an 839-residue protein sequence, read N- to C-terminus: Flocculation protein FLO11 (839 aa).

The N-terminal stretch at 1 to 22 (MVSLRSIFTSSILAAGLTRAHG) is a signal peptide. One can recognise a Flo11 1 domain in the interval 24 to 194 (SGKTCPTSEV…PKKCSSDCGV (171 aa)). 4 cysteine pairs are disulfide-bonded: Cys28–Cys188, Cys37–Cys167, Cys129–Cys192, and Cys143–Cys152. An N-linked (GlcNAc...) asparagine glycan is attached at Asn79. Residues 187–342 (KCSSDCGVEP…GPTCPTSEVS (156 aa)) are disordered. The segment covering 198-317 (TSDEPEEPTT…EPTTSEEPEE (120 aa)) has biased composition (acidic residues). The 171-residue stretch at 332-502 (EGPTCPTSEV…PKKCSSNCGV (171 aa)) folds into the Flo11 2 domain. Asn387 carries an N-linked (GlcNAc...) asparagine glycan. A disordered region spans residues 496–606 (CSSNCGVEPT…LVPTTKTETD (111 aa)). Residues 506–592 (TSDEPEEPTT…PTTSDEEPGT (87 aa)) are compositionally biased toward acidic residues. Positions 593-606 (TEEPLVPTTKTETD) are enriched in low complexity.

This sequence belongs to the flocculin family. Highly divergent.

Functionally, homophilic binding protein that enables kin discrimination in heterogeneous yeast populations by mediating homotypic cell-cell interactions during flocculation, a reversible and asexual process in which cells adhere to form aggregates (flocs). This Komagataella phaffii (strain GS115 / ATCC 20864) (Yeast) protein is Flocculation protein FLO11.